The following is a 302-amino-acid chain: Pathogenicity locus probable regulatory protein HrpS (302 aa).

A Sigma-54 factor interaction domain is found at 9-237; sequence DDLDAERVPN…LKAAAKRHVL (229 aa). ATP is bound by residues 37-44 and 99-108; these read GETGTGKD and AQGGTLYLDE. The H-T-H motif DNA-binding region spans 279–298; that stretch reads IDAASLELDIPRRTLYRRIK.

Its function is as follows. Regulates the activation of the sigma factor HrpL which itself induces the expression of hprD as well as other hrp loci which are involved in plant pathogenicity, hrmA and avr genes. Probably interacts with sigma-54. This chain is Pathogenicity locus probable regulatory protein HrpS (hrpS), found in Pseudomonas syringae pv. syringae.